We begin with the raw amino-acid sequence, 396 residues long: Lipid-A-disaccharide synthase (396 aa).

This sequence belongs to the LpxB family.

It carries out the reaction a lipid X + a UDP-2-N,3-O-bis[(3R)-3-hydroxyacyl]-alpha-D-glucosamine = a lipid A disaccharide + UDP + H(+). The protein operates within bacterial outer membrane biogenesis; LPS lipid A biosynthesis. Condensation of UDP-2,3-diacylglucosamine and 2,3-diacylglucosamine-1-phosphate to form lipid A disaccharide, a precursor of lipid A, a phosphorylated glycolipid that anchors the lipopolysaccharide to the outer membrane of the cell. The protein is Lipid-A-disaccharide synthase of Rhodopseudomonas palustris (strain BisB18).